The chain runs to 307 residues: Undecaprenyl-diphosphatase (307 aa).

The next 6 membrane-spanning stretches (helical) occupy residues 40-60 (AAKT…VVYF), 79-99 (LRLA…GLLF), 107-127 (LFGP…MIGV), 183-203 (AAAA…ATVF), 219-239 (IVAL…VIAV), and 249-269 (LAPF…LWIA).

It belongs to the UppP family.

The protein localises to the cell inner membrane. It carries out the reaction di-trans,octa-cis-undecaprenyl diphosphate + H2O = di-trans,octa-cis-undecaprenyl phosphate + phosphate + H(+). Its function is as follows. Catalyzes the dephosphorylation of undecaprenyl diphosphate (UPP). Confers resistance to bacitracin. This Sorangium cellulosum (strain So ce56) (Polyangium cellulosum (strain So ce56)) protein is Undecaprenyl-diphosphatase.